The following is a 457-amino-acid chain: Chromosomal replication initiator protein DnaA (457 aa).

A domain I, interacts with DnaA modulators region spans residues 1 to 73; it reads MANNYQTLYD…SKYLSEEFKK (73 aa). The interval 73–108 is domain II; sequence KENIVNFEFIIDNEKLLINSNFLIKETNIKNRFNFS. The tract at residues 109–331 is domain III, AAA+ region; that stretch reads DELLRYNFNN…GNLKQICFWA (223 aa). Residues Gly156, Gly158, Lys159, and Thr160 each contribute to the ATP site. Residues 332–457 form a domain IV, binds dsDNA region; the sequence is DNDTNKDLII…LQINLIINKF (126 aa).

It belongs to the DnaA family. In terms of assembly, oligomerizes as a right-handed, spiral filament on DNA at oriC.

Its subcellular location is the cytoplasm. In terms of biological role, plays an essential role in the initiation and regulation of chromosomal replication. ATP-DnaA binds to the origin of replication (oriC) to initiate formation of the DNA replication initiation complex once per cell cycle. Binds the DnaA box (a 9 base pair repeat at the origin) and separates the double-stranded (ds)DNA. Forms a right-handed helical filament on oriC DNA; dsDNA binds to the exterior of the filament while single-stranded (ss)DNA is stabiized in the filament's interior. The ATP-DnaA-oriC complex binds and stabilizes one strand of the AT-rich DNA unwinding element (DUE), permitting loading of DNA polymerase. After initiation quickly degrades to an ADP-DnaA complex that is not apt for DNA replication. Binds acidic phospholipids. The chain is Chromosomal replication initiator protein DnaA from Ureaplasma parvum serovar 3 (strain ATCC 700970).